Consider the following 512-residue polypeptide: Phosphoenolpyruvate carboxylase (512 aa).

The protein belongs to the PEPCase type 2 family. As to quaternary structure, homotetramer. Mg(2+) serves as cofactor.

It carries out the reaction oxaloacetate + phosphate = phosphoenolpyruvate + hydrogencarbonate. Catalyzes the irreversible beta-carboxylation of phosphoenolpyruvate (PEP) to form oxaloacetate (OAA), a four-carbon dicarboxylic acid source for the tricarboxylic acid cycle. The sequence is that of Phosphoenolpyruvate carboxylase from Caldivirga maquilingensis (strain ATCC 700844 / DSM 13496 / JCM 10307 / IC-167).